Reading from the N-terminus, the 97-residue chain is Aspartyl/glutamyl-tRNA(Asn/Gln) amidotransferase subunit C (97 aa).

Belongs to the GatC family. In terms of assembly, heterotrimer of A, B and C subunits.

The catalysed reaction is L-glutamyl-tRNA(Gln) + L-glutamine + ATP + H2O = L-glutaminyl-tRNA(Gln) + L-glutamate + ADP + phosphate + H(+). It carries out the reaction L-aspartyl-tRNA(Asn) + L-glutamine + ATP + H2O = L-asparaginyl-tRNA(Asn) + L-glutamate + ADP + phosphate + 2 H(+). Allows the formation of correctly charged Asn-tRNA(Asn) or Gln-tRNA(Gln) through the transamidation of misacylated Asp-tRNA(Asn) or Glu-tRNA(Gln) in organisms which lack either or both of asparaginyl-tRNA or glutaminyl-tRNA synthetases. The reaction takes place in the presence of glutamine and ATP through an activated phospho-Asp-tRNA(Asn) or phospho-Glu-tRNA(Gln). In Cyanothece sp. (strain PCC 7425 / ATCC 29141), this protein is Aspartyl/glutamyl-tRNA(Asn/Gln) amidotransferase subunit C.